A 319-amino-acid chain; its full sequence is Malate dehydrogenase (319 aa).

NAD(+)-binding positions include 10-15 (GAGNIG) and Asp-34. Residues Arg-83 and Arg-89 each contribute to the substrate site. Residues Asn-96 and 119-121 (ITN) each bind NAD(+). 2 residues coordinate substrate: Asn-121 and Arg-152. His-176 acts as the Proton acceptor in catalysis.

Belongs to the LDH/MDH superfamily. MDH type 3 family.

The catalysed reaction is (S)-malate + NAD(+) = oxaloacetate + NADH + H(+). In terms of biological role, catalyzes the reversible oxidation of malate to oxaloacetate. In Francisella tularensis subsp. holarctica (strain FTNF002-00 / FTA), this protein is Malate dehydrogenase.